The chain runs to 502 residues: ATP synthase subunit alpha (502 aa).

169-176 (GDRQTGKT) is a binding site for ATP.

The protein belongs to the ATPase alpha/beta chains family. As to quaternary structure, F-type ATPases have 2 components, CF(1) - the catalytic core - and CF(0) - the membrane proton channel. CF(1) has five subunits: alpha(3), beta(3), gamma(1), delta(1), epsilon(1). CF(0) has three main subunits: a(1), b(2) and c(9-12). The alpha and beta chains form an alternating ring which encloses part of the gamma chain. CF(1) is attached to CF(0) by a central stalk formed by the gamma and epsilon chains, while a peripheral stalk is formed by the delta and b chains.

The protein localises to the cell membrane. It carries out the reaction ATP + H2O + 4 H(+)(in) = ADP + phosphate + 5 H(+)(out). Functionally, produces ATP from ADP in the presence of a proton gradient across the membrane. The alpha chain is a regulatory subunit. The polypeptide is ATP synthase subunit alpha (Exiguobacterium sp. (strain ATCC BAA-1283 / AT1b)).